An 85-amino-acid polypeptide reads, in one-letter code: Putative membrane protein insertion efficiency factor (85 aa).

This sequence belongs to the UPF0161 family.

It is found in the cell inner membrane. In terms of biological role, could be involved in insertion of integral membrane proteins into the membrane. The protein is Putative membrane protein insertion efficiency factor of Tolumonas auensis (strain DSM 9187 / NBRC 110442 / TA 4).